The following is a 341-amino-acid chain: tRNA N6-adenosine threonylcarbamoyltransferase (341 aa).

2 residues coordinate Fe cation: histidine 111 and histidine 115. Residues 134–138 (LVSGG), aspartate 167, glycine 180, and asparagine 276 contribute to the substrate site. Aspartate 304 contacts Fe cation.

This sequence belongs to the KAE1 / TsaD family. It depends on Fe(2+) as a cofactor.

The protein resides in the cytoplasm. The catalysed reaction is L-threonylcarbamoyladenylate + adenosine(37) in tRNA = N(6)-L-threonylcarbamoyladenosine(37) in tRNA + AMP + H(+). Its function is as follows. Required for the formation of a threonylcarbamoyl group on adenosine at position 37 (t(6)A37) in tRNAs that read codons beginning with adenine. Is involved in the transfer of the threonylcarbamoyl moiety of threonylcarbamoyl-AMP (TC-AMP) to the N6 group of A37, together with TsaE and TsaB. TsaD likely plays a direct catalytic role in this reaction. This is tRNA N6-adenosine threonylcarbamoyltransferase from Ectopseudomonas mendocina (strain ymp) (Pseudomonas mendocina).